We begin with the raw amino-acid sequence, 231 residues long: Regulatory protein VanRc (231 aa).

One can recognise a Response regulatory domain in the interval 4–117 (KIVVVDDEKE…EVVARVKTQL (114 aa)). At Asp53 the chain carries 4-aspartylphosphate. The ompR/PhoB-type DNA-binding region spans 132–231 (VEEYEKDGLI…VWGVGYIIEK (100 aa)).

Phosphorylated by VanSc.

The protein localises to the cytoplasm. In terms of biological role, member of the two-component regulatory system VanSc/VanRc. Binds to the promoter regions of target genes. Activates the transcription of vanC1 and vanXYC in response to vancomycin which results in vancomycin resistance. This is Regulatory protein VanRc from Enterococcus gallinarum.